The following is a 430-amino-acid chain: Serine/threonine-protein kinase Sgk1 (430 aa).

A necessary for localization to the mitochondria region spans residues 1–60 (MTVKTEAARSTLTYSRMRGMVAILIAFMKQRRMGLNDFIQKLANNSYACKHPEVQSYLKI). The disordered stretch occupies residues 66-92 (PELMNANPSPPPSPSQQINLGPSSNPH). Ser74 carries the post-translational modification Phosphoserine. Ser78 carries the phosphoserine; by MAPK7 modification. Residues 81–91 (QQINLGPSSNP) are compositionally biased toward polar residues. Residues 98-354 (FHFLKVIGKG…FMEIKSHIFF (257 aa)) form the Protein kinase domain. ATP contacts are provided by residues 104–112 (IGKGSFGKV) and Lys127. Residues 131 to 141 (KKAILKKKEEK) carry the Nuclear localization signal motif. The active-site Proton acceptor is Asp222. Phosphothreonine; by PDPK1 is present on Thr256. The AGC-kinase C-terminal domain maps to 355-430 (SLINWDDLIN…SYAPPMDSFL (76 aa)). Position 368 is a phosphothreonine; by PKA (Thr368). 3 positions are modified to phosphoserine: Ser396, Ser400, and Ser421.

It belongs to the protein kinase superfamily. AGC Ser/Thr protein kinase family. In terms of assembly, homodimer; disulfide-linked. Forms a trimeric complex with FBXW7 and NOTCH1. Interacts with MAPK3/ERK1, MAPK1/ERK2, MAP2K1/MEK1, MAP2K2/MEK2, NEDD4, NEDD4L, MAPK7, CREB1, SLC9A3R2/NHERF2 and KCNJ1/ROMK1. Associates with the mammalian target of rapamycin complex 2 (mTORC2) via an interaction with MAPKAP1/SIN1. Interacts with MAPT/TAU. Post-translationally, regulated by phosphorylation. Activated by phosphorylation on Ser-421 by mTORC2, transforming it into a substrate for PDPK1 which phosphorylates it on Thr-256. Phosphorylation on Ser-396 and Ser-400 are also essential for its activity. Phosphorylation on Ser-78 by MAPK7 is required for growth factor-induced cell cycle progression. In terms of processing, ubiquitinated by NEDD4L; which promotes proteasomal degradation. Ubiquitinated by SYVN1 at the endoplasmic reticulum; which promotes rapid proteasomal degradation and maintains a high turnover rate in resting cells. As to expression, expressed in most tissues with highest levels in the ovary, thymus and lung. In the kidney, expressed within glomeruli of the cortex, at low levels in outer medulla and moderate levels in inner medulla and papilla.

The protein resides in the cytoplasm. It localises to the nucleus. It is found in the endoplasmic reticulum membrane. Its subcellular location is the cell membrane. The protein localises to the mitochondrion. The enzyme catalyses L-seryl-[protein] + ATP = O-phospho-L-seryl-[protein] + ADP + H(+). It catalyses the reaction L-threonyl-[protein] + ATP = O-phospho-L-threonyl-[protein] + ADP + H(+). Two specific sites, one in the kinase domain (Thr-256) and the other in the C-terminal regulatory region (Ser-421), need to be phosphorylated for its full activation. Phosphorylation at Ser-396 and Ser-400 are also essential for its activity. Activated by WNK1, WNK2, WNK3 and WNK4. Serine/threonine-protein kinase which is involved in the regulation of a wide variety of ion channels, membrane transporters, cellular enzymes, transcription factors, neuronal excitability, cell growth, proliferation, survival, migration and apoptosis. Plays an important role in cellular stress response. Contributes to regulation of renal Na(+) retention, renal K(+) elimination, salt appetite, gastric acid secretion, intestinal Na(+)/H(+) exchange and nutrient transport, insulin-dependent salt sensitivity of blood pressure, salt sensitivity of peripheral glucose uptake, cardiac repolarization and memory consolidation. Up-regulates Na(+) channels: SCNN1A/ENAC, SCN5A and ASIC1/ACCN2, K(+) channels: KCNJ1/ROMK1, KCNA1-5, KCNQ1-5 and KCNE1, epithelial Ca(2+) channels: TRPV5 and TRPV6, chloride channels: BSND, CLCN2 and CFTR, glutamate transporters: SLC1A3/EAAT1, SLC1A2 /EAAT2, SLC1A1/EAAT3, SLC1A6/EAAT4 and SLC1A7/EAAT5, amino acid transporters: SLC1A5/ASCT2, SLC38A1/SN1 and SLC6A19, creatine transporter: SLC6A8, Na(+)/dicarboxylate cotransporter: SLC13A2/NADC1, Na(+)-dependent phosphate cotransporter: SLC34A2/NAPI-2B, glutamate receptor: GRIK2/GLUR6. Up-regulates carriers: SLC9A3/NHE3, SLC12A1/NKCC2, SLC12A3/NCC, SLC5A3/SMIT, SLC2A1/GLUT1, SLC5A1/SGLT1 and SLC15A2/PEPT2. Regulates enzymes: GSK3A/B, PMM2 and Na(+)/K(+) ATPase, and transcription factors: CTNNB1 and nuclear factor NF-kappa-B. Stimulates sodium transport into epithelial cells by enhancing the stability and expression of SCNN1A/ENAC. This is achieved by phosphorylating the NEDD4L ubiquitin E3 ligase, promoting its interaction with 14-3-3 proteins, thereby preventing it from binding to SCNN1A/ENAC and targeting it for degradation. Regulates store-operated Ca(+2) entry (SOCE) by stimulating ORAI1 and STIM1. Regulates KCNJ1/ROMK1 directly via its phosphorylation or indirectly via increased interaction with SLC9A3R2/NHERF2. Phosphorylates MDM2 and activates MDM2-dependent ubiquitination of p53/TP53. Phosphorylates SLC2A4/GLUT4 and up-regulates its activity. Phosphorylates APBB1/FE65 and promotes its localization to the nucleus. Phosphorylates FBXW7 and plays an inhibitory role in the NOTCH1 signaling. Phosphorylates FOXO1 resulting in its relocalization from the nucleus to the cytoplasm. Phosphorylates FOXO3, promoting its exit from the nucleus and interference with FOXO3-dependent transcription. Phosphorylates BRAF and MAP3K3/MEKK3 and inhibits their activity. Phosphorylates SLC9A3/NHE3 in response to dexamethasone, resulting in its activation and increased localization at the cell membrane. Phosphorylates CREB1. Necessary for vascular remodeling during angiogenesis. Phosphorylates MAPT/TAU and mediates microtubule depolymerization and neurite formation in hippocampal neurons. Phosphorylates MAPK1/ERK2 and activates it by enhancing its interaction with MAP2K1/MEK1 and MAP2K2/MEK2. May also play an important role in the development of particular groups of neurons in the postnatal brain. The polypeptide is Serine/threonine-protein kinase Sgk1 (Sgk1) (Rattus norvegicus (Rat)).